A 274-amino-acid polypeptide reads, in one-letter code: Thiamine kinase (274 aa).

This sequence belongs to the thiamine kinase family.

It carries out the reaction thiamine + ATP = thiamine phosphate + ADP + H(+). It functions in the pathway cofactor biosynthesis; thiamine diphosphate biosynthesis; thiamine phosphate from thiamine: step 1/1. In terms of biological role, catalyzes the ATP-dependent phosphorylation of thiamine to thiamine phosphate. Is involved in thiamine salvage. The sequence is that of Thiamine kinase from Shigella dysenteriae serotype 1 (strain Sd197).